Consider the following 70-residue polypeptide: DNA-directed RNA polymerase subunit epsilon (70 aa).

The protein belongs to the RNA polymerase subunit epsilon family. RNAP is composed of a core of 2 alpha, a beta and a beta' subunit. The core is associated with a delta subunit, and at least one of epsilon or omega. When a sigma factor is associated with the core the holoenzyme is formed, which can initiate transcription.

It catalyses the reaction RNA(n) + a ribonucleoside 5'-triphosphate = RNA(n+1) + diphosphate. In terms of biological role, a non-essential component of RNA polymerase (RNAP). The polypeptide is DNA-directed RNA polymerase subunit epsilon (Limosilactobacillus reuteri (strain DSM 20016) (Lactobacillus reuteri)).